We begin with the raw amino-acid sequence, 146 residues long: Large ribosomal subunit protein bL9 (146 aa).

This sequence belongs to the bacterial ribosomal protein bL9 family. In terms of assembly, part of the 50S ribosomal subunit. Contacts protein L31.

In terms of biological role, binds to the 23S rRNA and protein L31. This chain is Large ribosomal subunit protein bL9 (rplI), found in Deinococcus radiodurans (strain ATCC 13939 / DSM 20539 / JCM 16871 / CCUG 27074 / LMG 4051 / NBRC 15346 / NCIMB 9279 / VKM B-1422 / R1).